The sequence spans 176 residues: 2-C-methyl-D-erythritol 2,4-cyclodiphosphate synthase (176 aa).

A divalent metal cation contacts are provided by Asp23, His25, and His60. 23-25 (DSH) is a 4-CDP-2-C-methyl-D-erythritol 2-phosphate binding site. 149 to 152 (TSGE) lines the 4-CDP-2-C-methyl-D-erythritol 2-phosphate pocket.

Belongs to the IspF family. In terms of assembly, homotrimer. A divalent metal cation serves as cofactor.

It carries out the reaction 4-CDP-2-C-methyl-D-erythritol 2-phosphate = 2-C-methyl-D-erythritol 2,4-cyclic diphosphate + CMP. It functions in the pathway isoprenoid biosynthesis; isopentenyl diphosphate biosynthesis via DXP pathway; isopentenyl diphosphate from 1-deoxy-D-xylulose 5-phosphate: step 4/6. Its function is as follows. Involved in the biosynthesis of isopentenyl diphosphate (IPP) and dimethylallyl diphosphate (DMAPP), two major building blocks of isoprenoid compounds. Catalyzes the conversion of 4-diphosphocytidyl-2-C-methyl-D-erythritol 2-phosphate (CDP-ME2P) to 2-C-methyl-D-erythritol 2,4-cyclodiphosphate (ME-CPP) with a corresponding release of cytidine 5-monophosphate (CMP). The sequence is that of 2-C-methyl-D-erythritol 2,4-cyclodiphosphate synthase from Chlamydia caviae (strain ATCC VR-813 / DSM 19441 / 03DC25 / GPIC) (Chlamydophila caviae).